The sequence spans 1342 residues: ATP-dependent RNA helicase TDRD9 (1342 aa).

The span at Lys31 to Gln63 shows a compositional bias: basic and acidic residues. The segment at Lys31–Leu81 is disordered. The region spanning Val99–Asn265 is the Helicase ATP-binding domain. An ATP-binding site is contributed by Gly112–Thr119. The DEAH box signature appears at Asp211 to His214. Positions Ser317–Gly503 constitute a Helicase C-terminal domain. The Tudor domain maps to Ser901–Pro962.

The protein belongs to the DEAD box helicase family. DEAH subfamily.

It localises to the cytoplasm. The protein localises to the nucleus. It catalyses the reaction ATP + H2O = ADP + phosphate + H(+). Functionally, ATP-binding RNA helicase which plays a central role during spermatogenesis by repressing transposable elements and preventing their mobilization, which is essential for the germline integrity. Acts via the piRNA metabolic process, which mediates the repression of transposable elements during meiosis by forming complexes composed of piRNAs and Piwi proteins and governs the methylation and subsequent repression of transposons. Acts downstream of piRNA biogenesis: exclusively required for transposon silencing in the nucleus, suggesting that it acts as a nuclear effector in the nucleus together with piwil4. This chain is ATP-dependent RNA helicase TDRD9, found in Danio rerio (Zebrafish).